The primary structure comprises 1368 residues: MQYSFTEKKRIRKSFAKRPIVHQVPFLLATQLESFSTFLQAEVPTAQRKPEGLQAAFTSVFPIVSHNGFARLEFVSYMLSPPAFNIKECQQRGLTYCSALRAKVRLVLLDKESPSKPVVKEVKEQEVYMGEIPLMTPTGSFVINGTERVIVSQLHRSPGVFFEHDKGKTHSSGKLLFSARIIPYRGSWLDFEFDPKDVLYFRVDRRRKMPVTILLKAIGLTPEQILANFFVFDNFTLMPEGAQMEFVPERLRGEVARFDITDRDGKVIVQKDKRINAKHIRDLENAKTKYISVPEDYLLGRVLAKNVVDGDTGEVIANANDEVTESVLDKLREAKIKDIQTLYTNDLDQGPYISSTLRIDETADKMAARIAIYRMMRPGEPPTEEAVEALFNRLFYSEEAYDLSKVGRMKFNRRVGRDEIVGPMTLQDDDILATIKILVELRNGKGEVDDIDHLGNRRVRCVGELAENQFRAGLVRVERAVKERLGQAESENLMPHDLINSKPISSAIREFFGSSQLSQFMDQTNPLSEITHKRRVSALGPGGLTRERAGFEVRDVHPTHYGRVCPIETPEGPNIGLINSLALYAHLNEYGFLETPYRKVTDGKVTDQIDYLSAIEEGRYVIAQANAAVAEDGTLTDELVSSREAGETLMVTPDRIQYMDVAPSQIVSVAASLIPFLEHDDANRALMGSNMQRQAVPCLRPEKPVVGTGIERTVAVDSGTTVQALRGGVVDYVDAGRIVIRVNDDEAVAGDVGVDIYNLIKYTRSNQNTNINQRPIAKVGDKVARGDVLADGASTDLGELALGQNMLVAFMPWNGYNFEDSILISEKVVADDRYTSIHIEELNVVARDTKLGPEEITRDISNLAEVQLGRLDESGIVYIGAEVEAGDVLVGKVTPKGETQLTPEEKLLRAIFGEKASDVKDTSLRVPSGMSGTVIDVQVFTREGIQRDKRAQQIIDDELKRYRLDLNDQLRIVEGDAFQRLARMLEGKVANGGPKKLAKGTKIERAYLEDLDHYHWFDIRLADEEAAAQLEAIKDSIEQKRHQFDLAFEEKRKKLTQGDELPPGVLKMVKVYLAVKRRLQPGDKMAGRHGNKGVVSKIVPIEDMPYMADGRPADVVLNPLGVPSRMNVGQVLEVHLGWAAKGLGWRIGEMLQRQARIEEVRAFLTKIYNESGRAEELESFSDDEILELAKNLREGVPFATPVFDGATEEEMSSMLDLAFPDDIAQNLGMTKSKNQVRLYDGRTGEAFERTVTVGYMHYLKLHHLVDDKMHARSTGPYSLVTQQPLGGKAQFGGQRFGEMEVWALEAYGASYVLQEMLTVKSDDVTGRTKVYENLVKGDHVIDAGMPESFNVLVKEIRSLGIDIDLDRN.

This sequence belongs to the RNA polymerase beta chain family. As to quaternary structure, the RNAP catalytic core consists of 2 alpha, 1 beta, 1 beta' and 1 omega subunit. When a sigma factor is associated with the core the holoenzyme is formed, which can initiate transcription.

It catalyses the reaction RNA(n) + a ribonucleoside 5'-triphosphate = RNA(n+1) + diphosphate. Functionally, DNA-dependent RNA polymerase catalyzes the transcription of DNA into RNA using the four ribonucleoside triphosphates as substrates. The chain is DNA-directed RNA polymerase subunit beta from Paraburkholderia phymatum (strain DSM 17167 / CIP 108236 / LMG 21445 / STM815) (Burkholderia phymatum).